The following is a 504-amino-acid chain: Bifunctional purine biosynthesis protein PurH (504 aa).

The 144-residue stretch at 1-144 (MRKRALISVY…KSFKNVVVIS (144 aa)) folds into the MGS-like domain.

The protein belongs to the PurH family.

The catalysed reaction is (6R)-10-formyltetrahydrofolate + 5-amino-1-(5-phospho-beta-D-ribosyl)imidazole-4-carboxamide = 5-formamido-1-(5-phospho-D-ribosyl)imidazole-4-carboxamide + (6S)-5,6,7,8-tetrahydrofolate. It carries out the reaction IMP + H2O = 5-formamido-1-(5-phospho-D-ribosyl)imidazole-4-carboxamide. It functions in the pathway purine metabolism; IMP biosynthesis via de novo pathway; 5-formamido-1-(5-phospho-D-ribosyl)imidazole-4-carboxamide from 5-amino-1-(5-phospho-D-ribosyl)imidazole-4-carboxamide (10-formyl THF route): step 1/1. The protein operates within purine metabolism; IMP biosynthesis via de novo pathway; IMP from 5-formamido-1-(5-phospho-D-ribosyl)imidazole-4-carboxamide: step 1/1. The protein is Bifunctional purine biosynthesis protein PurH of Fusobacterium nucleatum subsp. nucleatum (strain ATCC 25586 / DSM 15643 / BCRC 10681 / CIP 101130 / JCM 8532 / KCTC 2640 / LMG 13131 / VPI 4355).